A 375-amino-acid polypeptide reads, in one-letter code: Putative glycyl-radical enzyme activating enzyme MJ0021 (375 aa).

The 224-residue stretch at 23–246 folds into the Radical SAM core domain; the sequence is QCVKGGKLVL…LKVIKEFKGD (224 aa). Residues cysteine 38, cysteine 42, and cysteine 45 each contribute to the [4Fe-4S] cluster site. S-adenosyl-L-methionine-binding positions include 44-46 and glycine 87; that span reads YCP.

Belongs to the organic radical-activating enzymes family. The cofactor is [4Fe-4S] cluster.

It carries out the reaction glycyl-[protein] + reduced [flavodoxin] + S-adenosyl-L-methionine = glycin-2-yl radical-[protein] + semiquinone [flavodoxin] + 5'-deoxyadenosine + L-methionine + H(+). The protein is Putative glycyl-radical enzyme activating enzyme MJ0021 of Methanocaldococcus jannaschii (strain ATCC 43067 / DSM 2661 / JAL-1 / JCM 10045 / NBRC 100440) (Methanococcus jannaschii).